A 1401-amino-acid chain; its full sequence is DNA polymerase III PolC-type (1401 aa).

Residues 388–543 (FVVFDIETTG…EDAKATAEIF (156 aa)) enclose the Exonuclease domain.

This sequence belongs to the DNA polymerase type-C family. PolC subfamily.

It localises to the cytoplasm. The catalysed reaction is DNA(n) + a 2'-deoxyribonucleoside 5'-triphosphate = DNA(n+1) + diphosphate. Required for replicative DNA synthesis. This DNA polymerase also exhibits 3' to 5' exonuclease activity. The chain is DNA polymerase III PolC-type from Caldanaerobacter subterraneus subsp. tengcongensis (strain DSM 15242 / JCM 11007 / NBRC 100824 / MB4) (Thermoanaerobacter tengcongensis).